Consider the following 228-residue polypeptide: 2,3-bisphosphoglycerate-dependent phosphoglycerate mutase (228 aa).

Substrate-binding positions include 8–15 (RHGQSVWN), 21–22 (TG), Arg60, 87–90 (ERHY), Lys98, 114–115 (RR), and 183–184 (GN). His9 (tele-phosphohistidine intermediate) is an active-site residue. Catalysis depends on Glu87, which acts as the Proton donor/acceptor.

The protein belongs to the phosphoglycerate mutase family. BPG-dependent PGAM subfamily.

The enzyme catalyses (2R)-2-phosphoglycerate = (2R)-3-phosphoglycerate. It functions in the pathway carbohydrate degradation; glycolysis; pyruvate from D-glyceraldehyde 3-phosphate: step 3/5. Its function is as follows. Catalyzes the interconversion of 2-phosphoglycerate and 3-phosphoglycerate. The chain is 2,3-bisphosphoglycerate-dependent phosphoglycerate mutase from Staphylococcus carnosus (strain TM300).